We begin with the raw amino-acid sequence, 334 residues long: Cathepsin J (334 aa).

An N-terminal signal peptide occupies residues Met-1–Gly-17. Residues Ala-18–Gly-113 constitute a propeptide, activation peptide. Residue Cys-138 is part of the active site. N-linked (GlcNAc...) asparagine glycosylation is found at Asn-217, Asn-221, and Asn-268. Cys-269 and Cys-322 are oxidised to a cystine. His-276 is a catalytic residue. Asn-288 carries an N-linked (GlcNAc...) asparagine glycan. Residue Asn-300 is part of the active site.

This sequence belongs to the peptidase C1 family. Expressed specifically in placenta.

The protein localises to the lysosome. The polypeptide is Cathepsin J (Ctsj) (Rattus norvegicus (Rat)).